We begin with the raw amino-acid sequence, 78 residues long: UPF0335 protein RBE_1185 (78 aa).

It belongs to the UPF0335 family.

The sequence is that of UPF0335 protein RBE_1185 from Rickettsia bellii (strain RML369-C).